We begin with the raw amino-acid sequence, 309 residues long: 4-hydroxy-3-methylbut-2-enyl diphosphate reductase (309 aa).

Cysteine 13 serves as a coordination point for [4Fe-4S] cluster. Residues histidine 42 and histidine 75 each coordinate (2E)-4-hydroxy-3-methylbut-2-enyl diphosphate. Dimethylallyl diphosphate contacts are provided by histidine 42 and histidine 75. 2 residues coordinate isopentenyl diphosphate: histidine 42 and histidine 75. Position 97 (cysteine 97) interacts with [4Fe-4S] cluster. Histidine 125 is a (2E)-4-hydroxy-3-methylbut-2-enyl diphosphate binding site. Residue histidine 125 coordinates dimethylallyl diphosphate. Histidine 125 contacts isopentenyl diphosphate. Catalysis depends on glutamate 127, which acts as the Proton donor. Threonine 165 provides a ligand contact to (2E)-4-hydroxy-3-methylbut-2-enyl diphosphate. A [4Fe-4S] cluster-binding site is contributed by cysteine 195. Serine 223, serine 224, asparagine 225, and serine 267 together coordinate (2E)-4-hydroxy-3-methylbut-2-enyl diphosphate. Dimethylallyl diphosphate is bound by residues serine 223, serine 224, asparagine 225, and serine 267. Isopentenyl diphosphate-binding residues include serine 223, serine 224, asparagine 225, and serine 267.

This sequence belongs to the IspH family. [4Fe-4S] cluster serves as cofactor.

It catalyses the reaction isopentenyl diphosphate + 2 oxidized [2Fe-2S]-[ferredoxin] + H2O = (2E)-4-hydroxy-3-methylbut-2-enyl diphosphate + 2 reduced [2Fe-2S]-[ferredoxin] + 2 H(+). The catalysed reaction is dimethylallyl diphosphate + 2 oxidized [2Fe-2S]-[ferredoxin] + H2O = (2E)-4-hydroxy-3-methylbut-2-enyl diphosphate + 2 reduced [2Fe-2S]-[ferredoxin] + 2 H(+). The protein operates within isoprenoid biosynthesis; dimethylallyl diphosphate biosynthesis; dimethylallyl diphosphate from (2E)-4-hydroxy-3-methylbutenyl diphosphate: step 1/1. It functions in the pathway isoprenoid biosynthesis; isopentenyl diphosphate biosynthesis via DXP pathway; isopentenyl diphosphate from 1-deoxy-D-xylulose 5-phosphate: step 6/6. In terms of biological role, catalyzes the conversion of 1-hydroxy-2-methyl-2-(E)-butenyl 4-diphosphate (HMBPP) into a mixture of isopentenyl diphosphate (IPP) and dimethylallyl diphosphate (DMAPP). Acts in the terminal step of the DOXP/MEP pathway for isoprenoid precursor biosynthesis. The polypeptide is 4-hydroxy-3-methylbut-2-enyl diphosphate reductase (Chlamydia abortus (strain DSM 27085 / S26/3) (Chlamydophila abortus)).